The sequence spans 240 residues: Putative outer membrane protein RT0057 (240 aa).

The N-terminal stretch at 1 to 20 (MLKKLCVILFISSITINSHA) is a signal peptide.

The protein belongs to the OmpW/AlkL family.

The protein localises to the cell outer membrane. This is Putative outer membrane protein RT0057 from Rickettsia typhi (strain ATCC VR-144 / Wilmington).